A 164-amino-acid polypeptide reads, in one-letter code: Cyclic pyranopterin monophosphate synthase (164 aa).

Substrate-binding positions include M75–H77 and M116–E117. D131 is an active-site residue.

The protein belongs to the MoaC family. Homohexamer; trimer of dimers.

It carries out the reaction (8S)-3',8-cyclo-7,8-dihydroguanosine 5'-triphosphate = cyclic pyranopterin phosphate + diphosphate. It functions in the pathway cofactor biosynthesis; molybdopterin biosynthesis. In terms of biological role, catalyzes the conversion of (8S)-3',8-cyclo-7,8-dihydroguanosine 5'-triphosphate to cyclic pyranopterin monophosphate (cPMP). The protein is Cyclic pyranopterin monophosphate synthase of Staphylococcus aureus (strain MRSA252).